The primary structure comprises 227 residues: UPF0173 metal-dependent hydrolase BT9727_4343 (227 aa).

This sequence belongs to the UPF0173 family.

In Bacillus thuringiensis subsp. konkukian (strain 97-27), this protein is UPF0173 metal-dependent hydrolase BT9727_4343.